The chain runs to 243 residues: Uba3-binding protein but1 (243 aa).

The interval 28–50 (KSTKKRRSSTKDEETRGMHPHIK) is disordered.

Homodimer. Interacts with but2 and uba3.

The protein localises to the nucleus. In terms of biological role, acts as a negative regulator of the NEDD8 pathway. Has a role in meiosis. In Schizosaccharomyces pombe (strain 972 / ATCC 24843) (Fission yeast), this protein is Uba3-binding protein but1 (but1).